Here is a 356-residue protein sequence, read N- to C-terminus: Dual-specificity RNA methyltransferase RlmN (356 aa).

Glu87 serves as the catalytic Proton acceptor. Positions 106–339 constitute a Radical SAM core domain; it reads QEAKYTICVS…CTIRDSKGID (234 aa). Residues Cys113 and Cys344 are joined by a disulfide bond. [4Fe-4S] cluster contacts are provided by Cys120, Cys124, and Cys127. S-adenosyl-L-methionine is bound by residues 170–171, Ser202, 225–227, and Asn301; these read GE and SLH. The active-site S-methylcysteine intermediate is Cys344.

Belongs to the radical SAM superfamily. RlmN family. [4Fe-4S] cluster serves as cofactor.

It is found in the cytoplasm. It catalyses the reaction adenosine(2503) in 23S rRNA + 2 reduced [2Fe-2S]-[ferredoxin] + 2 S-adenosyl-L-methionine = 2-methyladenosine(2503) in 23S rRNA + 5'-deoxyadenosine + L-methionine + 2 oxidized [2Fe-2S]-[ferredoxin] + S-adenosyl-L-homocysteine. It carries out the reaction adenosine(37) in tRNA + 2 reduced [2Fe-2S]-[ferredoxin] + 2 S-adenosyl-L-methionine = 2-methyladenosine(37) in tRNA + 5'-deoxyadenosine + L-methionine + 2 oxidized [2Fe-2S]-[ferredoxin] + S-adenosyl-L-homocysteine. Functionally, specifically methylates position 2 of adenine 2503 in 23S rRNA and position 2 of adenine 37 in tRNAs. m2A2503 modification seems to play a crucial role in the proofreading step occurring at the peptidyl transferase center and thus would serve to optimize ribosomal fidelity. In Sulfurimonas denitrificans (strain ATCC 33889 / DSM 1251) (Thiomicrospira denitrificans (strain ATCC 33889 / DSM 1251)), this protein is Dual-specificity RNA methyltransferase RlmN.